The sequence spans 511 residues: Phosphoenolpyruvate carboxylase (511 aa).

It belongs to the PEPCase type 2 family. Homotetramer. Requires Mg(2+) as cofactor.

It carries out the reaction oxaloacetate + phosphate = phosphoenolpyruvate + hydrogencarbonate. Catalyzes the irreversible beta-carboxylation of phosphoenolpyruvate (PEP) to form oxaloacetate (OAA), a four-carbon dicarboxylic acid source for the tricarboxylic acid cycle. This is Phosphoenolpyruvate carboxylase from Saccharolobus islandicus (strain L.S.2.15 / Lassen #1) (Sulfolobus islandicus).